The sequence spans 429 residues: MGPFCLGCSHRKCYSPIRNLISQETFKFHFKNLRYAIDRKDTFLCYEVTRKDCDSPVSLHHGVFKNKDNIHAEICFLYWFHDKVLKVLSPREEFKITWYMSWSPCFECAEQVLRFLATHHNLSLDIFSSRLYNIRDPENQQNLCRLVQEGAQVAAMDLYEFKKCWKKFVDNGGRRFRPWKKLLTNFRYQDSKLQEILRPCYIPVPSSSSSTLSNICLTKGLPETRFCVERRRVHLLSEEEFYSQFYNQRVKHLCYYHGVKPYLCYQLEQFNGQAPLKGCLLSEKGKQHAEILFLDKIRSMELSQVIITCYLTWSPCPNCAWQLAAFKRDRPDLILHIYTSRLYFHWKRPFQKGLCSLWQSGILVDVMDLPQFTDCWTNFVNPKRPFWPWKGLEIISRRTQRRLHRIKESWGLQDLVNDFGNLQLGPPMS.

CMP/dCMP-type deaminase domains follow at residues 38 to 154 (DRKD…AQVA) and 238 to 357 (EEEF…LCSL). Histidine 71 provides a ligand contact to Zn(2+). Glutamate 73 functions as the Proton donor in the catalytic mechanism. Positions 105, 108, 288, 316, and 319 each coordinate Zn(2+).

This sequence belongs to the cytidine and deoxycytidylate deaminase family. As to quaternary structure, homodimer. Requires Zn(2+) as cofactor.

It localises to the cytoplasm. It catalyses the reaction a 2'-deoxycytidine in single-stranded DNA + H2O + H(+) = a 2'-deoxyuridine in single-stranded DNA + NH4(+). Its function is as follows. DNA deaminase (cytidine deaminase) which acts as an inhibitor of retrovirus replication and retrotransposon mobility via deaminase-dependent and -independent mechanisms. Selectively targets single-stranded DNA and does not deaminate double-stranded DNA or single- or double-stranded RNA. The chain is DNA dC-&gt;dU-editing enzyme APOBEC3 (Apobec3) from Rattus norvegicus (Rat).